The following is a 161-amino-acid chain: Protein PLANT CADMIUM RESISTANCE 12 (161 aa).

Residues 71 to 89 (AGLIHLALGFIGCSWLYAF) traverse the membrane as a helical segment.

Belongs to the cornifelin family.

The protein resides in the membrane. Its function is as follows. May be involved in heavy metals transport. This is Protein PLANT CADMIUM RESISTANCE 12 (PCR12) from Arabidopsis thaliana (Mouse-ear cress).